Here is a 239-residue protein sequence, read N- to C-terminus: MSLRGQVQIARSVFLLRIYILIWVQCLILMSVCAFCWLVLPHRLEQLFSSVRLTLSCLMISIVCLGLLRWAEPNFPKNVWILLTYTLLTSVAVTASGFHFSHRSVIYAMVATVTLFCFLTLATYLFARDVELQRSLLTGASTLILLLFAVFSLFPEAVSEILVMIAGLAVIVTSVVCDTQDILHDIEYESYIPGALCLYMDLMYLFVSVLYFMPSEPGSAHTAQTTVAATAAASPQFVS.

7 consecutive transmembrane segments (helical) span residues 20–40 (ILIW…WLVL), 48–68 (FSSV…LGLL), 80–100 (WILL…GFHF), 106–126 (IYAM…TYLF), 143–163 (LILL…EILV), 164–184 (MIAG…DILH), and 192–212 (IPGA…VLYF).

This sequence belongs to the cytomegalovirus US12 family.

The protein resides in the membrane. This is an uncharacterized protein from Homo sapiens (Human).